A 183-amino-acid chain; its full sequence is Ankyrin repeat domain-containing protein 39 (183 aa).

ANK repeat units lie at residues 30-59 (DFER…DPSQ), 63-92 (AGYT…KCDA), 96-125 (GGAT…NPRV), and 129-158 (DGMT…ALKA). Ser153 carries the phosphoserine modification.

The protein belongs to the ANKRD39 family.

This chain is Ankyrin repeat domain-containing protein 39 (ANKRD39), found in Homo sapiens (Human).